Here is a 279-residue protein sequence, read N- to C-terminus: NLP effector protein 9 (279 aa).

The signal sequence occupies residues 1–19 (MKISNLLGVLVVFLAVVKG). The Conserved undecapeptide motif motif lies at 151-161 (AIMYAWYFPDI). Asn-176 is a glycosylation site (N-linked (GlcNAc...) asparagine).

It belongs to the Necrosis inducing protein (NPP1) family.

The protein resides in the secreted. Its function is as follows. Secreted effector that acts as a pathogen-associated molecular pattern (PAMP) recognized by the plant immune system. Seems not to induce necrosis in Nicotiana benthamiana leaves. The protein is NLP effector protein 9 of Plasmopara viticola (Downy mildew of grapevine).